A 218-amino-acid chain; its full sequence is Probable transaldolase (218 aa).

The active-site Schiff-base intermediate with substrate is the Lys-87.

Belongs to the transaldolase family. Type 3B subfamily.

Its subcellular location is the cytoplasm. It carries out the reaction D-sedoheptulose 7-phosphate + D-glyceraldehyde 3-phosphate = D-erythrose 4-phosphate + beta-D-fructose 6-phosphate. Its pathway is carbohydrate degradation; pentose phosphate pathway; D-glyceraldehyde 3-phosphate and beta-D-fructose 6-phosphate from D-ribose 5-phosphate and D-xylulose 5-phosphate (non-oxidative stage): step 2/3. Its function is as follows. Transaldolase is important for the balance of metabolites in the pentose-phosphate pathway. This is Probable transaldolase from Phocaeicola vulgatus (strain ATCC 8482 / DSM 1447 / JCM 5826 / CCUG 4940 / NBRC 14291 / NCTC 11154) (Bacteroides vulgatus).